Here is a 314-residue protein sequence, read N- to C-terminus: Tetraacyldisaccharide 4'-kinase (314 aa).

54–61 (YIGGTGKT) lines the ATP pocket.

This sequence belongs to the LpxK family.

The catalysed reaction is a lipid A disaccharide + ATP = a lipid IVA + ADP + H(+). It functions in the pathway glycolipid biosynthesis; lipid IV(A) biosynthesis; lipid IV(A) from (3R)-3-hydroxytetradecanoyl-[acyl-carrier-protein] and UDP-N-acetyl-alpha-D-glucosamine: step 6/6. Functionally, transfers the gamma-phosphate of ATP to the 4'-position of a tetraacyldisaccharide 1-phosphate intermediate (termed DS-1-P) to form tetraacyldisaccharide 1,4'-bis-phosphate (lipid IVA). This Pelagibacter ubique (strain HTCC1062) protein is Tetraacyldisaccharide 4'-kinase.